Consider the following 106-residue polypeptide: Large ribosomal subunit protein eL42 (106 aa).

A disordered region spans residues 36-56 (FAQGKRRYDRKQSGYGGQTKP).

It belongs to the eukaryotic ribosomal protein eL42 family.

In Phaffia rhodozyma (Yeast), this protein is Large ribosomal subunit protein eL42 (RPL44).